The chain runs to 466 residues: Putative proline/betaine transporter (466 aa).

12 helical membrane-spanning segments follow: residues 20–42 (VVAT…YTTA), 63–83 (FAAL…FGII), 91–111 (VVLT…GLLP), 116–136 (IGLW…FSTG), 164–184 (IGTL…TFFL), 191–211 (SFGW…GLYL), 239–259 (IIRF…FFNV), 285–305 (VLIT…GKLA), 313–332 (VFLI…FMLL), 337–354 (FVVI…LSTY), 377–397 (VTFN…ATWL), and 405–425 (LAPA…ITFL).

Belongs to the major facilitator superfamily. Metabolite:H+ Symporter (MHS) family (TC 2.A.1.6) family.

Its subcellular location is the cell membrane. Its function is as follows. May be a proton symporter involved in the uptake of osmolytes such as proline and glycine betaine. This Staphylococcus aureus (strain MSSA476) protein is Putative proline/betaine transporter (proP).